We begin with the raw amino-acid sequence, 443 residues long: BBSome complex member BBS5 homolog (443 aa).

This sequence belongs to the BBS5 family.

It localises to the cytoplasm. The protein resides in the cytoskeleton. The protein localises to the flagellum axoneme. In Giardia intestinalis (strain ATCC 50803 / WB clone C6) (Giardia lamblia), this protein is BBSome complex member BBS5 homolog.